A 473-amino-acid chain; its full sequence is Photosystem II CP43 reaction center protein (473 aa).

Residues 1 to 14 (MKTLYSLRRFYPVE) constitute a propeptide that is removed on maturation. Threonine 15 bears the N-acetylthreonine mark. Position 15 is a phosphothreonine (threonine 15). The next 5 helical transmembrane spans lie at 69–93 (LFEV…PHLA), 134–155 (LLGP…KDRN), 178–200 (KALS…RKIT), 255–275 (KPFA…LSYS), and 291–312 (WFNN…ASQA). [CaMn4O5] cluster is bound at residue glutamate 367. The helical transmembrane segment at 447-471 (RARAAAAGFEKGIDRDFEPVLSMTP) threads the bilayer.

This sequence belongs to the PsbB/PsbC family. PsbC subfamily. As to quaternary structure, PSII is composed of 1 copy each of membrane proteins PsbA, PsbB, PsbC, PsbD, PsbE, PsbF, PsbH, PsbI, PsbJ, PsbK, PsbL, PsbM, PsbT, PsbX, PsbY, PsbZ, Psb30/Ycf12, at least 3 peripheral proteins of the oxygen-evolving complex and a large number of cofactors. It forms dimeric complexes. Binds multiple chlorophylls and provides some of the ligands for the Ca-4Mn-5O cluster of the oxygen-evolving complex. It may also provide a ligand for a Cl- that is required for oxygen evolution. PSII binds additional chlorophylls, carotenoids and specific lipids. is required as a cofactor.

It is found in the plastid. The protein resides in the chloroplast thylakoid membrane. In terms of biological role, one of the components of the core complex of photosystem II (PSII). It binds chlorophyll and helps catalyze the primary light-induced photochemical processes of PSII. PSII is a light-driven water:plastoquinone oxidoreductase, using light energy to abstract electrons from H(2)O, generating O(2) and a proton gradient subsequently used for ATP formation. The protein is Photosystem II CP43 reaction center protein of Pelargonium hortorum (Common geranium).